Reading from the N-terminus, the 195-residue chain is ALK and LTK ligand 2b (195 aa).

2 disulfides stabilise this stretch: Cys-156/Cys-192 and Cys-170/Cys-179.

Belongs to the ALKAL family. Homodimer. In terms of tissue distribution, highly expressed in the swim bladder and single cells of unknown identity in the head.

Its subcellular location is the secreted. It localises to the cell membrane. Its function is as follows. Cytokine that acts as a physiological ligand for receptor tyrosine kinases LTK and ALK. Required for neural crest cell differentiation and iridophore development during embryonic iridophore development and adult stripe development by acting as a receptor for LTK. Also required for iridophore formation in the adult eye. The polypeptide is ALK and LTK ligand 2b (Danio rerio (Zebrafish)).